We begin with the raw amino-acid sequence, 231 residues long: tRNA (guanine-N(7)-)-methyltransferase (231 aa).

4 residues coordinate S-adenosyl-L-methionine: Glu-62, Glu-87, Asp-114, and Asp-136. Residue Asp-136 is part of the active site. Residues Lys-140, Asp-172, and 210 to 213 (TRYE) contribute to the substrate site.

It belongs to the class I-like SAM-binding methyltransferase superfamily. TrmB family.

The catalysed reaction is guanosine(46) in tRNA + S-adenosyl-L-methionine = N(7)-methylguanosine(46) in tRNA + S-adenosyl-L-homocysteine. It functions in the pathway tRNA modification; N(7)-methylguanine-tRNA biosynthesis. Catalyzes the formation of N(7)-methylguanine at position 46 (m7G46) in tRNA. This Zymomonas mobilis subsp. mobilis (strain ATCC 31821 / ZM4 / CP4) protein is tRNA (guanine-N(7)-)-methyltransferase.